The primary structure comprises 622 residues: DNA mismatch repair protein MutL (622 aa).

This sequence belongs to the DNA mismatch repair MutL/HexB family.

In terms of biological role, this protein is involved in the repair of mismatches in DNA. It is required for dam-dependent methyl-directed DNA mismatch repair. May act as a 'molecular matchmaker', a protein that promotes the formation of a stable complex between two or more DNA-binding proteins in an ATP-dependent manner without itself being part of a final effector complex. This is DNA mismatch repair protein MutL from Clostridium acetobutylicum (strain ATCC 824 / DSM 792 / JCM 1419 / IAM 19013 / LMG 5710 / NBRC 13948 / NRRL B-527 / VKM B-1787 / 2291 / W).